The sequence spans 131 residues: MTLVVYLTRFSSTRSLKFFVVGITSFKNCRWPSEECTIAAEMSSYDSVSSSGSGGTCCCCCCCCLCRDSCVSTWTKNSVANAVATNASSEVSIYSGSFLAILCTFSTGNLGEHRGADAVSLPLVSLFIVLA.

This is an uncharacterized protein from Saccharomyces cerevisiae (strain ATCC 204508 / S288c) (Baker's yeast).